A 174-amino-acid chain; its full sequence is V-type proton ATPase catalytic subunit A (174 aa).

This sequence belongs to the ATPase alpha/beta chains family. In terms of assembly, V-ATPase is a heteromultimeric enzyme made up of two complexes: the ATP-hydrolytic V1 complex and the proton translocation V0 complex. The V1 complex consists of three catalytic AB heterodimers that form a heterohexamer, three peripheral stalks each consisting of EG heterodimers, one central rotor including subunits D and F, and the regulatory subunits C and H. The proton translocation complex V0 consists of the proton transport subunit a, a ring of proteolipid subunits c9c'', rotary subunit d, subunits e and f, and the accessory subunits ATP6AP1/Ac45 and ATP6AP2/PRR. Interacts with the V0 complex V-ATPase subunit a4 ATP6V0A4. Interacts with WFS1. Interacts with alpha-crystallin B chain/CRYAB and with MTOR, forming a ternary complex.

It is found in the cytoplasm. The protein resides in the cytosol. The protein localises to the cytoplasmic vesicle. Its subcellular location is the secretory vesicle. It localises to the clathrin-coated vesicle membrane. It is found in the lysosome. It carries out the reaction ATP + H2O + 4 H(+)(in) = ADP + phosphate + 5 H(+)(out). Its activity is regulated as follows. ATP hydrolysis occurs at the interface between the nucleotide-binding domains of subunits A and B. ATP hydrolysis triggers a conformational change in the subunits D and F, which induces a shift of subunit d. The c-ring is subsequently rotated and results in a continuous proton translocation across the membrane. Its function is as follows. Catalytic subunit of the V1 complex of vacuolar(H+)-ATPase (V-ATPase), a multisubunit enzyme composed of a peripheral complex (V1) that hydrolyzes ATP and a membrane integral complex (V0) that translocates protons. V-ATPase is responsible for acidifying and maintaining the pH of intracellular compartments and in some cell types, is targeted to the plasma membrane, where it is responsible for acidifying the extracellular environment. In aerobic conditions, involved in intracellular iron homeostasis, thus triggering the activity of Fe(2+) prolyl hydroxylase (PHD) enzymes, and leading to HIF1A hydroxylation and subsequent proteasomal degradation. May play a role in neurite development and synaptic connectivity. In Mesocricetus auratus (Golden hamster), this protein is V-type proton ATPase catalytic subunit A.